The chain runs to 514 residues: Multifunctional alkaline phosphatase superfamily protein PehA (514 aa).

Residues Asp12, Cys57, Asp324, and His325 each contribute to the Mn(2+) site. The active-site Nucleophile is Cys57. Residue Cys57 is modified to 3-oxoalanine (Cys).

It belongs to the alkaline phosphatase superfamily. In terms of assembly, homotetramer. Mn(2+) serves as cofactor. Post-translationally, the conversion to 3-oxoalanine (also known as C-formylglycine, FGly), of a serine or cysteine residue in prokaryotes and of a cysteine residue in eukaryotes, is critical for catalytic activity. Phosphate triester hydrolytic activity is retained with unmodified cysteine acting as a nucleophile.

Anions including Cl(-) and CH3COO(-), and SO4(2-) salts stimulate activity 20-40% at 100 mM. Functionally, hydrolytic enzyme with a broad substrate specificity acting on phosphate diesters and phosphonate monoesters. Hydrolyzes phosphate mono- and triesters, sulfate monoesters and sulfonate monoesters. Hydrolyzes glyphosate monoesters. Does not hydrolyze DNA or cGMP. Hydrolyzes glyceryl glyphosate, but this substrate has a much lower affinity than the glyphosate monoesters. The polypeptide is Multifunctional alkaline phosphatase superfamily protein PehA (Trinickia caryophylli (Paraburkholderia caryophylli)).